Consider the following 127-residue polypeptide: Small ribosomal subunit protein eS8 (127 aa).

It belongs to the eukaryotic ribosomal protein eS8 family. Part of the 30S ribosomal subunit.

This Pyrococcus horikoshii (strain ATCC 700860 / DSM 12428 / JCM 9974 / NBRC 100139 / OT-3) protein is Small ribosomal subunit protein eS8 (rps8e).